Here is a 385-residue protein sequence, read N- to C-terminus: WD repeat-containing protein 74 (385 aa).

6 WD repeats span residues Arg40–Gln80, Cys83–Asp122, Arg128–Phe168, Asp179–Val220, Thr224–Lys266, and Gly267–His306. Ser214 bears the Phosphoserine mark. The residue at position 311 (Lys311) is an N6-methyllysine. The segment at Ser320 to Ser385 is required for nucleolar and nuclear location. The segment at Asp323–Ser385 is disordered. The span at Ala372–Ser385 shows a compositional bias: basic residues.

In terms of assembly, isoform 1 interacts (through WDR repeats) with NVL; the interaction is independent of RNA or pre-60S ribosome particles. Isoform 2 does not interact with NVL. Interacts with MTREX; the interaction dissociation in a late stage of rRNA synthesis is required for appropriate maturation of pre-60S particles and depends on the ATPase activity of NVL.

It is found in the nucleus. It localises to the nucleolus. Its function is as follows. Regulatory protein of the MTREX-exosome complex involved in the synthesis of the 60S ribosomal subunit. Participates in an early cleavage of the pre-rRNA processing pathway in cooperation with NVL. This is WD repeat-containing protein 74 (WDR74) from Bos taurus (Bovine).